The sequence spans 213 residues: Orotate phosphoribosyltransferase (213 aa).

Lysine 26 lines the 5-phospho-alpha-D-ribose 1-diphosphate pocket. Orotate is bound at residue 34–35 (FF). Residues 72-73 (YK), arginine 99, lysine 100, lysine 103, histidine 105, and 124-132 (DDVITAGTA) contribute to the 5-phospho-alpha-D-ribose 1-diphosphate site. Residues threonine 128 and arginine 156 each coordinate orotate.

This sequence belongs to the purine/pyrimidine phosphoribosyltransferase family. PyrE subfamily. As to quaternary structure, homodimer. The cofactor is Mg(2+).

It catalyses the reaction orotidine 5'-phosphate + diphosphate = orotate + 5-phospho-alpha-D-ribose 1-diphosphate. It participates in pyrimidine metabolism; UMP biosynthesis via de novo pathway; UMP from orotate: step 1/2. Its function is as follows. Catalyzes the transfer of a ribosyl phosphate group from 5-phosphoribose 1-diphosphate to orotate, leading to the formation of orotidine monophosphate (OMP). The protein is Orotate phosphoribosyltransferase of Escherichia coli O45:K1 (strain S88 / ExPEC).